The chain runs to 124 residues: Small ribosomal subunit protein uS12 (124 aa).

The disordered stretch occupies residues 1–22 (MATVNQLVRKPRQKPDAKSNVA). Position 89 is a 3-methylthioaspartic acid (Asp-89).

This sequence belongs to the universal ribosomal protein uS12 family. As to quaternary structure, part of the 30S ribosomal subunit. Contacts proteins S8 and S17. May interact with IF1 in the 30S initiation complex.

Functionally, with S4 and S5 plays an important role in translational accuracy. In terms of biological role, interacts with and stabilizes bases of the 16S rRNA that are involved in tRNA selection in the A site and with the mRNA backbone. Located at the interface of the 30S and 50S subunits, it traverses the body of the 30S subunit contacting proteins on the other side and probably holding the rRNA structure together. The combined cluster of proteins S8, S12 and S17 appears to hold together the shoulder and platform of the 30S subunit. The polypeptide is Small ribosomal subunit protein uS12 (Pseudoalteromonas atlantica (strain T6c / ATCC BAA-1087)).